Here is a 72-residue protein sequence, read N- to C-terminus: uncharacterized protein (72 aa).

It belongs to the baculoviridae 8 kDa protein family.

This is an uncharacterized protein from Orgyia pseudotsugata (Douglas-fir tussock moth).